Here is a 516-residue protein sequence, read N- to C-terminus: Propionyl-CoA carboxylase, carboxyltransferase subunit (516 aa).

Residues 1-32 are disordered; that stretch reads MTMEDRIDELREKREEALKGGGEDRIASQHDK. Residues 3-259 enclose the CoA carboxyltransferase N-terminal domain; that stretch reads MEDRIDELRE…NNVEDPPRVE (257 aa). The CoA carboxyltransferase C-terminal domain occupies 263–509; the sequence is DPERVADELE…KSKRKSQPDK (247 aa).

Belongs to the AccD/PCCB family. The propionyl coenzyme A carboxylase (PCC) complex is composed of three subunits: PccA (biotin carboxylase and biotin-carboxyl carrier), PccB (carboxyltransferase) and PccX.

It catalyses the reaction propanoyl-CoA + hydrogencarbonate + ATP = (S)-methylmalonyl-CoA + ADP + phosphate + H(+). Its pathway is metabolic intermediate metabolism; propanoyl-CoA degradation; succinyl-CoA from propanoyl-CoA: step 1/3. Part of the propionyl coenzyme A carboxylase (PCC) complex involved in propionate utilization and in the production of the poly(3-hydroxybutyrate-co-3-hydroxyvalerate)(PHBV), which is a water-insoluble biopolymer used as intracellular energy reserve material when cells grow under conditions of nutrient limitation. The complex catalyzes the carboxylation of propionyl-CoA to methylmalonyl-CoA. PCC is also able to catalyze the carboxylation of acetyl-CoA. The sequence is that of Propionyl-CoA carboxylase, carboxyltransferase subunit from Haloferax mediterranei (strain ATCC 33500 / DSM 1411 / JCM 8866 / NBRC 14739 / NCIMB 2177 / R-4) (Halobacterium mediterranei).